Reading from the N-terminus, the 102-residue chain is NADH-quinone oxidoreductase subunit K (102 aa).

The next 3 membrane-spanning stretches (helical) occupy residues 5-25 (LSHYLTVSAILFTLGVFGIFL), 31-51 (IVILMSVELILLAVNINMVAF), and 65-85 (LFILTVAAAEAAIGLAILVVF).

The protein belongs to the complex I subunit 4L family. As to quaternary structure, NDH-1 is composed of 14 different subunits. Subunits NuoA, H, J, K, L, M, N constitute the membrane sector of the complex.

The protein localises to the cell inner membrane. It catalyses the reaction a quinone + NADH + 5 H(+)(in) = a quinol + NAD(+) + 4 H(+)(out). Its function is as follows. NDH-1 shuttles electrons from NADH, via FMN and iron-sulfur (Fe-S) centers, to quinones in the respiratory chain. The immediate electron acceptor for the enzyme in this species is believed to be ubiquinone. Couples the redox reaction to proton translocation (for every two electrons transferred, four hydrogen ions are translocated across the cytoplasmic membrane), and thus conserves the redox energy in a proton gradient. This is NADH-quinone oxidoreductase subunit K from Rhizobium leguminosarum bv. trifolii (strain WSM2304).